The following is a 241-amino-acid chain: Transmembrane protein 176A (241 aa).

A Phosphoserine modification is found at serine 38. 4 consecutive transmembrane segments (helical) span residues tryptophan 65 to phenylalanine 85, serine 93 to tyrosine 113, leucine 127 to phenylalanine 147, and leucine 193 to leucine 213.

This sequence belongs to the TMEM176 family. Interacts with MCOLN2.

Its subcellular location is the membrane. This chain is Transmembrane protein 176A (TMEM176A), found in Bos taurus (Bovine).